The primary structure comprises 598 residues: Potassium voltage-gated channel subfamily A member 5 (598 aa).

Residues 1-89 (MEIALGPLEN…EEGEGDPGLS (89 aa)) form a disordered region. Residues 1 to 195 (MEIALGPLEN…FYQLGDEAME (195 aa)) form a tetramerization domain region. Over 1–231 (MEIALGPLEN…LIFEYPESSG (231 aa)) the chain is Cytoplasmic. The segment covering 60–69 (RPLPPQPPEL) has biased composition (pro residues). Residue lysine 205 forms a Glycyl lysine isopeptide (Lys-Gly) (interchain with G-Cter in SUMO) linkage. Residues 232 to 253 (SARAIAIVSVLVILISIITFCL) traverse the membrane as a helical segment. Residues 254–308 (ETLPEFKDERELLRHPPVPHQPPAAPALGANGSGAVAPASGSTVAPLLPRTLADP) are Extracellular-facing. Residues 309 to 330 (FFIVETTCVIWFTFELLVRFFA) form a helical membrane-spanning segment. Cysteine 331 is lipidated: S-palmitoyl cysteine. The Cytoplasmic portion of the chain corresponds to 331–341 (CPSKAEFSRNI). The helical transmembrane segment at 342–362 (MNIIDIVAIFPYFITLGTELA) threads the bilayer. Residues 363–380 (EQQPGGGGGGQNGQQAMS) lie on the Extracellular side of the membrane. A helical; Voltage-sensor transmembrane segment spans residues 381 to 401 (LAILRVIRLVRVFRIFKLSRH). The Cytoplasmic segment spans residues 402 to 416 (SKGLQILGKTLQASM). Positions 403–416 (KGLQILGKTLQASM) are S4-S5 linker. Residues 417 to 438 (RELGLLIFFLFIGVILFSSAVY) traverse the membrane as a helical segment. Residues 439–452 (FAEADNQGTHFSSI) lie on the Extracellular side of the membrane. The helical intramembrane region spans 453–464 (PDAFWWAVVTMT). The short motif at 465–470 (TVGYGD) is the Selectivity filter element. An intramembrane segment occupies 465 to 472 (TVGYGDMR). The helical transmembrane segment at 480–508 (IVGSLCAIAGVLTIALPVPVIVSNFNYFY) threads the bilayer. Over 509–598 (HRETDHEEQA…CLDTSRETDL (90 aa)) the chain is Cytoplasmic. A disordered region spans residues 517–539 (QAALKEEPGSQSRGTSLDAGGQR). A Glycyl lysine isopeptide (Lys-Gly) (interchain with G-Cter in SUMO) cross-link involves residue lysine 521. The PDZ-binding signature appears at 596 to 598 (TDL).

This sequence belongs to the potassium channel family. A (Shaker) (TC 1.A.1.2) subfamily. Kv1.5/KCNA5 sub-subfamily. As to quaternary structure, homotetramer and heterotetramer of potassium channel proteins. Interacts with DLG1, which enhances channel currents. Forms a ternary complex with DLG1 and CAV3. Interacts with KCNAB1. Interacts with UBE2I. Interacts with XIRP2; the interaction is required for normal action potential configuration in the heart. Glycosylated. Post-translationally, sumoylated on Lys-205, and Lys-521, preferentially with SUMO3. Sumoylation regulates the voltage sensitivity of the channel.

It is found in the cell membrane. It carries out the reaction K(+)(in) = K(+)(out). Functionally, voltage-gated potassium channel that mediates transmembrane potassium transport in excitable membranes. Forms tetrameric potassium-selective channels through which potassium ions pass in accordance with their electrochemical gradient. The channel alternates between opened and closed conformations in response to the voltage difference across the membrane. Can form functional homotetrameric channels and heterotetrameric channels that contain variable proportions of KCNA1, KCNA2, KCNA4, KCNA5, and possibly other family members as well; channel properties depend on the type of alpha subunits that are part of the channel. Channel properties are modulated by cytoplasmic beta subunits that regulate the subcellular location of the alpha subunits and promote rapid inactivation. Homotetrameric channels display rapid activation and slow inactivation. Required for normal electrical conduction including formation of the infranodal ventricular conduction system and normal action potential configuration, as a result of its interaction with XIRP2. May play a role in regulating the secretion of insulin in normal pancreatic islets. The protein is Potassium voltage-gated channel subfamily A member 5 (KCNA5) of Oryctolagus cuniculus (Rabbit).